A 150-amino-acid chain; its full sequence is UPF0540 protein At1g62080 (150 aa).

The first 21 residues, 1–21 (MNATKFLVLLVIGVLCAIVTA), serve as a signal peptide directing secretion. Residues 119-135 (AAAARAKGKVASASRVK) are compositionally biased toward low complexity. The segment at 119-150 (AAAARAKGKVASASRVKGSSEKKKKDRKGKKD) is disordered.

This sequence belongs to the UPF0540 family.

The polypeptide is UPF0540 protein At1g62080 (Arabidopsis thaliana (Mouse-ear cress)).